A 431-amino-acid polypeptide reads, in one-letter code: Tol-Pal system protein TolB (431 aa).

Positions 1 to 26 are cleaved as a signal peptide; the sequence is MSLMTKLGFRALVASCLITAGSAANA. The segment at 406–431 is disordered; that stretch reads DGSAPPQILSVQGGSVREPSWGPFMQ.

Belongs to the TolB family. In terms of assembly, the Tol-Pal system is composed of five core proteins: the inner membrane proteins TolA, TolQ and TolR, the periplasmic protein TolB and the outer membrane protein Pal. They form a network linking the inner and outer membranes and the peptidoglycan layer.

Its subcellular location is the periplasm. Its function is as follows. Part of the Tol-Pal system, which plays a role in outer membrane invagination during cell division and is important for maintaining outer membrane integrity. This Burkholderia cenocepacia (strain HI2424) protein is Tol-Pal system protein TolB.